A 261-amino-acid polypeptide reads, in one-letter code: Cytochrome c oxidase subunit 3 (261 aa).

The Mitochondrial matrix portion of the chain corresponds to 1 to 15 (MTHQLHQYHLVDPSP). A helical membrane pass occupies residues 16–34 (WPLTGAMGSLLLASGLAVW). Residues 35–40 (FHTNNT) are Mitochondrial intermembrane-facing. Residues 41–66 (MLLKFGLLTLLLTMFQWWRDIIREST) form a helical membrane-spanning segment. The Mitochondrial matrix portion of the chain corresponds to 67–72 (YQGHHT). Residues 73–105 (SGVQKNMRYGMILFITSEVFFFLGFFWALYHVS) traverse the membrane as a helical segment. Residues 106-128 (LVPTPELGAEWPPIGITPLNPME) lie on the Mitochondrial intermembrane side of the membrane. Residues 129–152 (VPLLNTAVLLSSGATITWSHHTMM) traverse the membrane as a helical segment. The Mitochondrial matrix portion of the chain corresponds to 153–155 (KGN). Residues 156-183 (KKEATHALMLTIILGAYFTALQLSEYME) form a helical membrane-spanning segment. The Mitochondrial intermembrane portion of the chain corresponds to 184–190 (TPFTIAD). A helical membrane pass occupies residues 191–223 (SVYGSLFFVATGFHGLHVMIGTSFLMVCALRLA). Over 224 to 232 (KHHFTITHH) the chain is Mitochondrial matrix. Residues 233–256 (FGYEAAIWYWHFVDIVWLFLYISV) traverse the membrane as a helical segment. Topologically, residues 257 to 261 (YWWGS) are mitochondrial intermembrane.

Belongs to the cytochrome c oxidase subunit 3 family. In terms of assembly, component of the cytochrome c oxidase (complex IV, CIV), a multisubunit enzyme composed of 14 subunits. The complex is composed of a catalytic core of 3 subunits MT-CO1, MT-CO2 and MT-CO3, encoded in the mitochondrial DNA, and 11 supernumerary subunits COX4I, COX5A, COX5B, COX6A, COX6B, COX6C, COX7A, COX7B, COX7C, COX8 and NDUFA4, which are encoded in the nuclear genome. The complex exists as a monomer or a dimer and forms supercomplexes (SCs) in the inner mitochondrial membrane with NADH-ubiquinone oxidoreductase (complex I, CI) and ubiquinol-cytochrome c oxidoreductase (cytochrome b-c1 complex, complex III, CIII), resulting in different assemblies (supercomplex SCI(1)III(2)IV(1) and megacomplex MCI(2)III(2)IV(2)).

The protein resides in the mitochondrion inner membrane. It carries out the reaction 4 Fe(II)-[cytochrome c] + O2 + 8 H(+)(in) = 4 Fe(III)-[cytochrome c] + 2 H2O + 4 H(+)(out). Its function is as follows. Component of the cytochrome c oxidase, the last enzyme in the mitochondrial electron transport chain which drives oxidative phosphorylation. The respiratory chain contains 3 multisubunit complexes succinate dehydrogenase (complex II, CII), ubiquinol-cytochrome c oxidoreductase (cytochrome b-c1 complex, complex III, CIII) and cytochrome c oxidase (complex IV, CIV), that cooperate to transfer electrons derived from NADH and succinate to molecular oxygen, creating an electrochemical gradient over the inner membrane that drives transmembrane transport and the ATP synthase. Cytochrome c oxidase is the component of the respiratory chain that catalyzes the reduction of oxygen to water. Electrons originating from reduced cytochrome c in the intermembrane space (IMS) are transferred via the dinuclear copper A center (CU(A)) of subunit 2 and heme A of subunit 1 to the active site in subunit 1, a binuclear center (BNC) formed by heme A3 and copper B (CU(B)). The BNC reduces molecular oxygen to 2 water molecules using 4 electrons from cytochrome c in the IMS and 4 protons from the mitochondrial matrix. The sequence is that of Cytochrome c oxidase subunit 3 (MT-CO3) from Lycodon semicarinatus (Ryukyu odd-tooth snake).